We begin with the raw amino-acid sequence, 229 residues long: Cytochrome c oxidase subunit 2 (229 aa).

The Mitochondrial intermembrane portion of the chain corresponds to 1–26; that stretch reads MANWTQLGLQDASSPLMEELIYFHDY. The helical transmembrane segment at 27 to 48 threads the bilayer; sequence TLIILTLITILVFYGLASLLFS. Over 49–62 the chain is Mitochondrial matrix; the sequence is SNTNRFFLEGQGLE. A helical membrane pass occupies residues 63–82; sequence TVWTIIPAVILIFIALPSLQ. The Mitochondrial intermembrane portion of the chain corresponds to 83–229; it reads LLYLMDEVNN…ETWVSNFITE (147 aa). Residues His-161, Cys-196, Glu-198, Cys-200, His-204, and Met-207 each coordinate Cu cation. Glu-198 provides a ligand contact to Mg(2+).

This sequence belongs to the cytochrome c oxidase subunit 2 family. Component of the cytochrome c oxidase (complex IV, CIV), a multisubunit enzyme composed of a catalytic core of 3 subunits and several supernumerary subunits. The complex exists as a monomer or a dimer and forms supercomplexes (SCs) in the inner mitochondrial membrane with ubiquinol-cytochrome c oxidoreductase (cytochrome b-c1 complex, complex III, CIII). Cu cation is required as a cofactor.

It localises to the mitochondrion inner membrane. The enzyme catalyses 4 Fe(II)-[cytochrome c] + O2 + 8 H(+)(in) = 4 Fe(III)-[cytochrome c] + 2 H2O + 4 H(+)(out). In terms of biological role, component of the cytochrome c oxidase, the last enzyme in the mitochondrial electron transport chain which drives oxidative phosphorylation. The respiratory chain contains 3 multisubunit complexes succinate dehydrogenase (complex II, CII), ubiquinol-cytochrome c oxidoreductase (cytochrome b-c1 complex, complex III, CIII) and cytochrome c oxidase (complex IV, CIV), that cooperate to transfer electrons derived from NADH and succinate to molecular oxygen, creating an electrochemical gradient over the inner membrane that drives transmembrane transport and the ATP synthase. Cytochrome c oxidase is the component of the respiratory chain that catalyzes the reduction of oxygen to water. Electrons originating from reduced cytochrome c in the intermembrane space (IMS) are transferred via the dinuclear copper A center (CU(A)) of subunit 2 and heme A of subunit 1 to the active site in subunit 1, a binuclear center (BNC) formed by heme A3 and copper B (CU(B)). The BNC reduces molecular oxygen to 2 water molecules using 4 electrons from cytochrome c in the IMS and 4 protons from the mitochondrial matrix. The sequence is that of Cytochrome c oxidase subunit 2 (COII) from Patiria pectinifera (Starfish).